The following is a 770-amino-acid chain: MFPQSRHPTPHQAAGQPFKFTIPESLDRIKEEFQFLQAQYHSLKLECEKLASEKTEMQRHYVMYYEMSYGLNIEMHKQTEIAKRLNTICAQVIPFLSQEHQQQVAQAVERAKQVTMAELNAIIGQQQLQAQHLSHGHGPPVPLTPHPSGLQPPGIPPLGGSAGLLALSSALSGQSHLAIKDDKKHHDAEHHRDREPGTSNSLLVPDSLRGTDKRRNGPEFSNDIKKRKVDDKDSSHYDSDGDKSDDNLVVDVSNEDPSSPRASPAHSPRENGIDKNRLLKKDASSSPASTASSASSTSLKSKEMSLHEKASTPVLKSSTPTPRSDMPTPGTSATPGLRPGLGKPPAIDPLVNQAAAGLRTPLAVPGPYPAPFGMVPHAGMNGELTSPGAAYASLHNMSPQMSAAAAAAAVVAYGRSPMVGFDPPPHMRVPTIPPNLAGIPGGKPAYSFHVTADGQMQPVPFPPDALIGPGIPRHARQINTLNHGEVVCAVTISNPTRHVYTGGKGCVKVWDISHPGNKSPVSQLDCLNRDNYIRSCKLLPDGCTLIVGGEASTLSIWDLAAPTPRIKAELTSSAPACYALAISPDSKVCFSCCSDGNIAVWDLHNQTLVRQFQGHTDGASCIDISNDGTKLWTGGLDNTVRSWDLREGRQLQQHDFTSQIFSLGYCPTGEWLAVGMESSNVEVLHVNKPDKYQLHLHESCVLSLKFAYCGKWFVSTGKDNLLNAWRTPYGASIFQSKESSSVLSCDISVDDKYIVTGSGDKKATVYEVIY.

The tract at residues 1–131 is q domain; sequence MFPQSRHPTP…IIGQQQLQAQ (131 aa). 2 disordered regions span residues 128–157 and 176–348; these read LQAQHLSHGHGPPVPLTPHPSGLQPPGIPP and HLAI…PAID. Positions 132-199 are GP domain; the sequence is HLSHGHGPPV…HHRDREPGTS (68 aa). Composition is skewed to basic and acidic residues over residues 178–196 and 209–246; these read AIKDDKKHHDAEHHRDREP and RGTDKRRNGPEFSNDIKKRKVDDKDSSHYDSDGDKSDD. A ccN domain region spans residues 200-268; sequence NSLLVPDSLR…SPRASPAHSP (69 aa). The Nuclear localization signal signature appears at 225-228; that stretch reads KKRK. Position 239 is a phosphoserine (Ser-239). Positions 257–266 are enriched in low complexity; the sequence is PSSPRASPAH. Ser-259, Ser-263, and Ser-267 each carry phosphoserine; by CDK1. The segment covering 267-283 has biased composition (basic and acidic residues); it reads SPRENGIDKNRLLKKDA. The interval 269 to 450 is SP domain; that stretch reads RENGIDKNRL…GGKPAYSFHV (182 aa). The span at 284–298 shows a compositional bias: low complexity; the sequence is SSSPASTASSASSTS. Ser-286 bears the Phosphoserine mark. Basic and acidic residues predominate over residues 300 to 310; sequence KSKEMSLHEKA. WD repeat units lie at residues 470 to 501, 528 to 558, 572 to 602, 614 to 644, 696 to 726, and 737 to 767; these read GIPRHARQINTLNHGEVVCAVTISNPTRHVYT, NRDNYIRSCKLLPDGCTLIVGGEASTLSIWD, SSAPACYALAISPDSKVCFSCCSDGNIAVWD, GHTDGASCIDISNDGTKLWTGGLDNTVRSWD, LHESCVLSLKFAYCGKWFVSTGKDNLLNAWR, and KESSSVLSCDISVDDKYIVTGSGDKKATVYE.

Belongs to the WD repeat Groucho/TLE family. Homooligomer and heterooligomer with other family members. Binds RUNX1, RUNX3, FOXA2, KDM6A, UTY, histone H3, HESX1, ESRRG and the NF-kappa-B subunit RELA. Interacts with HES1 (via WRPW motif). Binds TCF7, LEF1, TCF7L1 and TCF7L2. Interacts with SIX3. Interacts with EFNB1. Interacts with TLE4. Interacts with FOXG1/BF-1; the interaction is inhibited by TLE6/GRG6. Post-translationally, phosphorylated, probably by CDK1. The degree of phosphorylation varies throughout the cell cycle, and is highest at the G2/M transition. Becomes hyperphosphorylated in response to cell differentiation and interaction with HES1 or RUNX1. In terms of processing, ubiquitinated by XIAP/BIRC4. As to expression, in all tissues examined, mostly in brain, liver and muscle.

It is found in the nucleus. In terms of biological role, transcriptional corepressor that binds to a number of transcription factors. Inhibits NF-kappa-B-regulated gene expression. Inhibits the transcriptional activation mediated by FOXA2, and by CTNNB1 and TCF family members in Wnt signaling. Enhances FOXG1/BF-1- and HES1-mediated transcriptional repression. The effects of full-length TLE family members may be modulated by association with dominant-negative AES. Unusual function as coactivator for ESRRG. In Homo sapiens (Human), this protein is Transducin-like enhancer protein 1 (TLE1).